The sequence spans 1548 residues: Multidrug resistance protein (1548 aa).

At 1–238 (MVDNGHVTIA…YHVWAQILPK (238 aa)) the chain is on the cytoplasmic side. The ABC transmembrane type-1 1 domain occupies 231–514 (VWAQILPKLL…IPIIISSILQ (284 aa)). Residues 239-256 (LLSDVTALMLPVLLEYFV) traverse the membrane as a helical segment. An N-linked (GlcNAc...) asparagine glycan is attached at Asn263. 5 helical membrane-spanning segments follow: residues 266 to 287 (WGWG…SCSA), 349 to 367 (VMYF…LLLI), 375 to 392 (VPGM…AVIS), 463 to 480 (ATPT…HVSG), and 500 to 519 (VSFF…FVSA). Over 520 to 932 (KRVTAFIECP…PWSTYVAYLK (413 aa)) the chain is Cytoplasmic. The ABC transporter 1 domain occupies 634–855 (VEEGDREYYQ…ALEETLRGEL (222 aa)). Position 667 to 674 (667 to 674 (GSTGSGKS)) interacts with ATP. Helical transmembrane passes span 933 to 950 (SCGG…FALT), 975 to 993 (TYLY…GSPL), 1051 to 1070 (GYLY…IIMV), and 1072 to 1088 (VQPF…YSYY). The region spanning 940–1221 (WGCLLATFAL…LVRQVAMVEA (282 aa)) is the ABC transmembrane type-1 2 domain. Residues Asn1095 and Asn1154 are each glycosylated (N-linked (GlcNAc...) asparagine). A run of 2 helical transmembrane segments spans residues 1164–1182 (LEFL…GVIG) and 1186–1205 (GASS…SMTL). Residues 1206–1548 (TETLNWLVRQ…RIVQPAVLSD (343 aa)) are Cytoplasmic-facing. Residues 1286 to 1521 (LVLEGVQMRY…HQSMFHSMVE (236 aa)) enclose the ABC transporter 2 domain. An ATP-binding site is contributed by 1320–1327 (GRTGSGKS).

Belongs to the ABC transporter superfamily. ABCB family. Multidrug resistance exporter (TC 3.A.1.201) subfamily.

It is found in the membrane. It catalyses the reaction ATP + H2O + xenobioticSide 1 = ADP + phosphate + xenobioticSide 2.. The chain is Multidrug resistance protein (PGPA) from Leishmania tarentolae (Sauroleishmania tarentolae).